The chain runs to 158 residues: 6,7-dimethyl-8-ribityllumazine synthase (158 aa).

Residues phenylalanine 22, 57–59, and 81–83 contribute to the 5-amino-6-(D-ribitylamino)uracil site; these read AFE and AVI. 86-87 is a (2S)-2-hydroxy-3-oxobutyl phosphate binding site; that stretch reads GT. Histidine 89 functions as the Proton donor in the catalytic mechanism. Position 114 (phenylalanine 114) interacts with 5-amino-6-(D-ribitylamino)uracil. Residue arginine 128 coordinates (2S)-2-hydroxy-3-oxobutyl phosphate.

The protein belongs to the DMRL synthase family. As to quaternary structure, forms an icosahedral capsid composed of 60 subunits, arranged as a dodecamer of pentamers.

It catalyses the reaction (2S)-2-hydroxy-3-oxobutyl phosphate + 5-amino-6-(D-ribitylamino)uracil = 6,7-dimethyl-8-(1-D-ribityl)lumazine + phosphate + 2 H2O + H(+). It functions in the pathway cofactor biosynthesis; riboflavin biosynthesis; riboflavin from 2-hydroxy-3-oxobutyl phosphate and 5-amino-6-(D-ribitylamino)uracil: step 1/2. Functionally, catalyzes the formation of 6,7-dimethyl-8-ribityllumazine by condensation of 5-amino-6-(D-ribitylamino)uracil with 3,4-dihydroxy-2-butanone 4-phosphate. This is the penultimate step in the biosynthesis of riboflavin. The protein is 6,7-dimethyl-8-ribityllumazine synthase of Shewanella amazonensis (strain ATCC BAA-1098 / SB2B).